Reading from the N-terminus, the 403-residue chain is Interferon-induced protein with tetratricopeptide repeats 3 (403 aa).

4 TPR repeats span residues 94–127 (LVTW…CQKF), 136–169 (PELE…KPKD), 172–206 (CSSG…NPQN), and 241–274 (TDVL…TVNN).

Belongs to the IFIT family. In terms of assembly, component of an interferon-dependent multiprotein complex, at least composed of IFIT1, IFIT2 and IFIT3. Interacts with IFIT1 and IFIT2. Interacts (via N-terminus) with MAVS, TBK1, TRAF6 and RIGI. Interacts with COPS5.

The protein localises to the cytoplasm. Its subcellular location is the mitochondrion. Its function is as follows. IFN-induced antiviral protein which acts as an inhibitor of cellular as well as viral processes, cell migration, proliferation, signaling, and viral replication. Enhances MAVS-mediated host antiviral responses by serving as an adapter bridging TBK1 to MAVS which leads to the activation of TBK1 and phosphorylation of IRF3 and phosphorylated IRF3 translocates into nucleus to promote antiviral gene transcription. Exhibits an antiproliferative activity via the up-regulation of cell cycle negative regulators CDKN1A/p21 and CDKN1B/p27. Normally, CDKN1B/p27 turnover is regulated by COPS5, which binds CDKN1B/p27 in the nucleus and exports it to the cytoplasm for ubiquitin-dependent degradation. IFIT3 sequesters COPS5 in the cytoplasm, thereby increasing nuclear CDKN1B/p27 protein levels. Up-regulates CDKN1A/p21 by down-regulating MYC, a repressor of CDKN1A/p21. Can negatively regulate the apoptotic effects of IFIT2. The chain is Interferon-induced protein with tetratricopeptide repeats 3 (Ifit3) from Mus musculus (Mouse).